Consider the following 814-residue polypeptide: Lon protease 1 (814 aa).

Over residues 1–17 (MTDDRDKTNEDPEKIIE) the composition is skewed to basic and acidic residues. The tract at residues 1–28 (MTDDRDKTNEDPEKIIEADFNPEDPDDA) is disordered. The 197-residue stretch at 49–245 (LPIIPLRPRP…KVLVLLKKEL (197 aa)) folds into the Lon N-terminal domain. 398 to 405 (GPPGVGKT) contributes to the ATP binding site. The region spanning 633–814 (EDVPGVVTGL…YRDVYQVAFG (182 aa)) is the Lon proteolytic domain. Catalysis depends on residues S721 and K764.

The protein belongs to the peptidase S16 family. Homohexamer. Organized in a ring with a central cavity.

It localises to the cytoplasm. It carries out the reaction Hydrolysis of proteins in presence of ATP.. Functionally, ATP-dependent serine protease that mediates the selective degradation of mutant and abnormal proteins as well as certain short-lived regulatory proteins. Required for cellular homeostasis and for survival from DNA damage and developmental changes induced by stress. Degrades polypeptides processively to yield small peptide fragments that are 5 to 10 amino acids long. Binds to DNA in a double-stranded, site-specific manner. This chain is Lon protease 1, found in Syntrophotalea carbinolica (strain DSM 2380 / NBRC 103641 / GraBd1) (Pelobacter carbinolicus).